The following is a 1958-amino-acid chain: Echinoderm microtubule-associated protein-like 6 (1958 aa).

WD repeat units lie at residues 59 to 100, 104 to 145, 148 to 187, 195 to 233, 235 to 273, 280 to 321, 323 to 362, 364 to 403, 406 to 445, and 561 to 601; these read GHND…TVSI, VHTH…LLAS, GHSDRIFDISWDPYQPNRMVSCGVKHIKFWTLCGNALTAK, GDLQTILCLACAKEDITYSGALNGDIYVWKGLTLVRTIQ, AHSAGIFSLYACEEGFATGGRDGCIRLWDTDFKPITKID, GYKG…LILQ, HCEGELWALALHPKKPLAVTGSDDRSVRLWSLADHALIAR, NMEEAVRSVSFSPDGSQLALGMKDGSFIVLRVRDMTEVVH, DRKEVIHEMKFSPDGSYLAVGSNDGPVDVYAVAQRYKKIG, and GHSA…VSNG. The tract at residues 604 to 627 is disordered; the sequence is ETTPQEGGADSYSEESDSDFSDVP. A compositionally biased stretch (acidic residues) spans 615 to 627; sequence YSEESDSDFSDVP. 10 WD repeats span residues 725 to 766, 770 to 811, 814 to 853, 861 to 900, 901 to 940, 996 to 1035, 1038 to 1077, 1080 to 1120, 1191 to 1230, and 1236 to 1276; these read GHDD…CLSL, HHQR…KIAT, GHKDKIFVVKCNPQHADKLVTVGIKHIKFWQQAGGGFTSK, GKLETMMCVSYGRMEDLVFSGAATGDIFIWKDVLLLKTVK, AHDGPVFAMYALDKGFVTGGKDGIVELWDDMFERCLKTYA, HMEGEVWGLAAHPLLPICATVSDDKTLRIWELSSQHRMLA, KLKKGGRCCAFSPDGKALAVGLNDGSFLVVNADTVEDMLS, HRKE…RVGI, SDVTDVNAANLTKDGSLLATGDDFGFVKLFSYPVKGQHAR, and GHSA…TQES. Residues 1322-1337 show a composition bias toward basic and acidic residues; that stretch reads KPHQQLKEVSMEERPP. Residues 1322–1352 form a disordered region; it reads KPHQQLKEVSMEERPPVSRAAPQPEKLQKNN. 10 WD repeats span residues 1412–1456, 1460–1501, 1504–1543, 1553–1591, 1593–1638, 1685–1724, 1726–1767, 1768–1807, 1880–1919, and 1925–1958; these read EHTD…TLSM, FHTK…KVAS, GHLERIFVVEFRPDSDTQFVSVGVKHMKFWTLAGSALLYK, AKMQTMLSVAFGANNLTFTGAINGDVYVWKEHFLIRLVA, AHTG…CRAF, HMEGEIWGLATHPSKDMFISASNDGTARIWDLADKKLLNK, NLGH…GKKR, DRKSAIQDIRISPDNRFLAVGSSEQTVDFYDLTQGTSLNR, ADKADVNCACVTHAGLNIVTGDDFGLLKLFDFPCTEKFAK, and GHSAHVTNIRFSSDDKYVVSTGGDDCSVFVWRCL.

Belongs to the WD repeat EMAP family.

It localises to the cytoplasm. It is found in the cytoskeleton. In terms of biological role, may modify the assembly dynamics of microtubules, such that microtubules are slightly longer, but more dynamic. This chain is Echinoderm microtubule-associated protein-like 6 (Eml6), found in Mus musculus (Mouse).